The primary structure comprises 1797 residues: Non-reducing polyketide synthase nscA (1797 aa).

Residues 17-256 (SDDLKDLFRR…PLPVYDGLCH (240 aa)) are N-terminal acylcarrier protein transacylase domain (SAT). In terms of domain architecture, Ketosynthase family 3 (KS3) spans 392-825 (SSKLAIVGMA…GGNTTLLLED (434 aa)). Catalysis depends on for beta-ketoacyl synthase activity residues Cys-565, His-700, and His-743. Positions 931–1251 (FTGQGAYYSG…SLVTLHLAGL (321 aa)) are malonyl-CoA:ACP transacylase (MAT) domain. The interval 1318–1637 (TSLIHQITAE…RLLMDRFFSP (320 aa)) is product template (PT) domain. An N-terminal hotdog fold region spans residues 1322-1458 (HQITAETIES…ATVRFEDPAA (137 aa)). The region spanning 1322-1632 (HQITAETIES…FRRVPRLLMD (311 aa)) is the PKS/mFAS DH domain. The active-site Proton acceptor; for dehydratase activity is His-1354. The segment at 1482–1632 (VEGKASRLSK…FRRVPRLLMD (151 aa)) is C-terminal hotdog fold. Asp-1543 serves as the catalytic Proton donor; for dehydratase activity. A compositionally biased stretch (polar residues) spans 1663–1686 (SVPEISAPSPSIVVSDSTANNTLT). A disordered region spans residues 1663–1723 (SVPEISAPSP…PESESAEPLG (61 aa)). The segment covering 1698–1709 (SSSESSTPKESP) has biased composition (low complexity). Residues 1720 to 1797 (EPLGNTVSQC…EMTAWIEEYC (78 aa)) form the Carrier domain. The residue at position 1757 (Ser-1757) is an O-(pantetheine 4'-phosphoryl)serine.

Pantetheine 4'-phosphate serves as cofactor.

It functions in the pathway secondary metabolite biosynthesis. Its function is as follows. Non-reducing polyketide synthase; part of the gene cluster that mediates the biosynthesis of neosartoricin B, a prenylated anthracenone that probably exhibits T-cell antiproliferative activity, suggestive of a physiological role as an immunosuppressive agent. The non-reducing polyketide synthase nscA probably synthesizes and cyclizes the decaketide backbone. The hydrolase nscB then mediates the product release through hydrolysis followed by spontaneous decarboxylation. The prenyltransferase nscD catalyzes the addition of the dimethylallyl group to the aromatic C5. The FAD-dependent monooxygenase nscC is then responsible for the stereospecific hydroxylation at C2. Neosartoricin B can be converted into two additional compounds neosartoricins C and D. Neosartoricin C is a spirocyclic compound that is cyclized through the attack of C3 hydroxyl on C14, followed by dehydration. On the other hand, neosartoricin D is a further cyclized compound in which attack of C2 on C14 in neosartoricin C results in the formation of the acetal-containing dioxabicyclo-octanone ring. Both of these compounds are novel and possibly represent related metabolites of the gene cluster. The protein is Non-reducing polyketide synthase nscA of Arthroderma gypseum (strain ATCC MYA-4604 / CBS 118893) (Microsporum gypseum).